Consider the following 302-residue polypeptide: Recombination-associated protein RdgC (302 aa).

The protein belongs to the RdgC family.

The protein resides in the cytoplasm. It is found in the nucleoid. May be involved in recombination. This is Recombination-associated protein RdgC from Proteus mirabilis (strain HI4320).